The chain runs to 105 residues: MAAKIKKGDKVVVLAGRDKGRSGEVLQVLPKEDRALVRGINLVKRHQRQTAKQEAGIYTKEATIHLSNLALADPKDGKATRVGFKILEDGRKVRFAKHSGDVIDG.

It belongs to the universal ribosomal protein uL24 family. As to quaternary structure, part of the 50S ribosomal subunit.

Its function is as follows. One of two assembly initiator proteins, it binds directly to the 5'-end of the 23S rRNA, where it nucleates assembly of the 50S subunit. One of the proteins that surrounds the polypeptide exit tunnel on the outside of the subunit. In Beijerinckia indica subsp. indica (strain ATCC 9039 / DSM 1715 / NCIMB 8712), this protein is Large ribosomal subunit protein uL24.